Reading from the N-terminus, the 109-residue chain is uncharacterized protein (109 aa).

It is found in the mitochondrion. This is an uncharacterized protein from Marchantia polymorpha (Common liverwort).